Here is a 341-residue protein sequence, read N- to C-terminus: Phosphoribosylformylglycinamidine cyclo-ligase (341 aa).

This sequence belongs to the AIR synthase family.

It is found in the cytoplasm. The enzyme catalyses 2-formamido-N(1)-(5-O-phospho-beta-D-ribosyl)acetamidine + ATP = 5-amino-1-(5-phospho-beta-D-ribosyl)imidazole + ADP + phosphate + H(+). It participates in purine metabolism; IMP biosynthesis via de novo pathway; 5-amino-1-(5-phospho-D-ribosyl)imidazole from N(2)-formyl-N(1)-(5-phospho-D-ribosyl)glycinamide: step 2/2. In Finegoldia magna (strain ATCC 29328 / DSM 20472 / WAL 2508) (Peptostreptococcus magnus), this protein is Phosphoribosylformylglycinamidine cyclo-ligase.